Here is a 315-residue protein sequence, read N- to C-terminus: Olfactory receptor 3A10 (315 aa).

At 1–28 (MEPGAWGNRTAVTDFILLGLTGNVRLQP) the chain is on the extracellular side. N8 carries N-linked (GlcNAc...) asparagine glycosylation. Residues 29–49 (ILFVVFFFAYIVTVGGNLSIL) traverse the membrane as a helical segment. The Cytoplasmic segment spans residues 50–68 (AAIFVEPKLHTPMYYFLGN). A helical membrane pass occupies residues 69–89 (LSLLDIGCISVTVPPMLVCLL). At 90 to 97 (AHECRVPY) the chain is on the extracellular side. Residues 98-118 (AACISQLFFFHLLAGVDCHLL) form a helical membrane-spanning segment. C100 and C192 are joined by a disulfide. Residues 119-145 (TAMAYDRYLAICQPLTYSTRMSREVQG) are Cytoplasmic-facing. Residues 146 to 166 (TLVGICCTVSFINALTHTVAV) form a helical membrane-spanning segment. Over 167-200 (SVLDFCGPNVVNHFYCDLPPLFQLSCSSIYLNGQ) the chain is Extracellular. A helical transmembrane segment spans residues 201 to 221 (LLFVGATFMGVVPMILISVSY). At 222–239 (AHVAAAVLRIRSTEGRKK) the chain is on the cytoplasmic side. A helical transmembrane segment spans residues 240–260 (AFSTCGSHLTVVCIFYGTGFF). The Extracellular portion of the chain corresponds to 261-274 (SYMRLGSVSASDKD). A helical membrane pass occupies residues 275-295 (KGIGILNTILSPMLNPLIYSL). At 296 to 315 (RNPDVQGALKRVLTGKRYPV) the chain is on the cytoplasmic side.

Belongs to the G-protein coupled receptor 1 family.

Its subcellular location is the cell membrane. Its function is as follows. Odorant receptor. In Mus musculus (Mouse), this protein is Olfactory receptor 3A10.